A 252-amino-acid chain; its full sequence is CLAVATA3/ESR (CLE)-related protein 4A-2 (252 aa).

Residues 1–21 (MAKNAMLCLLILRVVLALAFA) form the signal peptide. The segment at 21–83 (ATNKKGDEEP…SNQLPNNNWM (63 aa)) is required for secretion from the host cytoplasm to the host apoplasm. A glycan (N-linked (GlcNAc...) asparagine) is linked at N32. The segment at 116-252 (RKTGMHSQRH…APAGPDPIHH (137 aa)) is disordered. 4 stretches are compositionally biased toward basic and acidic residues: residues 125-137 (HHEE…EKRV), 144-179 (PIHH…EKRV), 186-200 (PIHH…EKRA), and 207-242 (PTHH…EKRG). The A-1 repeat unit spans residues 127-135 (EETTLEQEK). Residues 127–219 (EETTLEQEKR…HEETTLEQEK (93 aa)) form a 6 X approximate repeat A region. Residues 136–147 (RVAGAGPDPIHH) form a CLE-1 repeat. Positions 136–252 (RVAGAGPDPI…APAGPDPIHH (117 aa)) are 6 X approximate repeat CLE. One copy of the A-2 repeat lies at 148 to 156 (QDTTLEQEK). A CLE-2 repeat occupies 157–168 (RAVPAGPDPKHH). The A-3 repeat unit spans residues 169 to 177 (EETTLEQEK). The stretch at 178–189 (RVAGAGPDPIHH) is one CLE-3 repeat. The A-4 repeat unit spans residues 190–198 (QDTTLEQEK). One copy of the CLE-4 repeat lies at 199–210 (RAVPAGPDPTHH). The A-5 repeat unit spans residues 211–219 (EETTLEQEK). A CLE-5 repeat occupies 220-231 (RAVPAGPDPKHH). An A-6 repeat occupies 232–240 (EETTFEQEK). The stretch at 241–252 (RGAPAGPDPIHH) is one CLE-6 repeat.

This sequence belongs to the CLV3/ESR signal peptide family. Highly expressed exclusively within the dorsal esophageal gland cell during syncytium formation in host plants.

It is found in the secreted. It localises to the host cytoplasm. Its subcellular location is the host extracellular space. The protein resides in the extracellular space. The protein localises to the apoplast. Its function is as follows. Mimics host plant CLE extracellular signal peptides that regulate cell fate. May play a role in the differentiation or division of feeding cells (syncytia) induced in plant roots during infection. In Globodera rostochiensis (Golden nematode worm), this protein is CLAVATA3/ESR (CLE)-related protein 4A-2 (CLE-4A-2).